A 96-amino-acid chain; its full sequence is Large ribosomal subunit protein uL23 (96 aa).

It belongs to the universal ribosomal protein uL23 family. As to quaternary structure, part of the 50S ribosomal subunit. Contacts protein L29, and trigger factor when it is bound to the ribosome.

Functionally, one of the early assembly proteins it binds 23S rRNA. One of the proteins that surrounds the polypeptide exit tunnel on the outside of the ribosome. Forms the main docking site for trigger factor binding to the ribosome. The polypeptide is Large ribosomal subunit protein uL23 (Endomicrobium trichonymphae).